The following is a 178-amino-acid chain: Large ribosomal subunit protein uL6 (178 aa).

This sequence belongs to the universal ribosomal protein uL6 family. Part of the 50S ribosomal subunit.

Functionally, this protein binds to the 23S rRNA, and is important in its secondary structure. It is located near the subunit interface in the base of the L7/L12 stalk, and near the tRNA binding site of the peptidyltransferase center. The protein is Large ribosomal subunit protein uL6 of Helicobacter pylori (strain HPAG1).